Reading from the N-terminus, the 378-residue chain is Alpha-D-ribose 1-methylphosphonate 5-triphosphate diphosphatase (378 aa).

Belongs to the metallo-dependent hydrolases superfamily.

The enzyme catalyses alpha-D-ribose 1-methylphosphonate 5-triphosphate + H2O = alpha-D-ribose 1-methylphosphonate 5-phosphate + diphosphate + H(+). Functionally, catalyzes the hydrolysis of alpha-D-ribose 1-methylphosphonate triphosphate (RPnTP) to form alpha-D-ribose 1-methylphosphonate phosphate (PRPn) and diphosphate. This is Alpha-D-ribose 1-methylphosphonate 5-triphosphate diphosphatase (phnM) from Escherichia coli (strain K12).